The sequence spans 490 residues: Cytochrome P450 2C8 (490 aa).

3 residues coordinate substrate: S100, N204, and R241. S100 carries the post-translational modification Phosphoserine. C435 contacts heme.

It belongs to the cytochrome P450 family. Heme serves as cofactor.

The protein localises to the endoplasmic reticulum membrane. Its subcellular location is the microsome membrane. The catalysed reaction is an organic molecule + reduced [NADPH--hemoprotein reductase] + O2 = an alcohol + oxidized [NADPH--hemoprotein reductase] + H2O + H(+). It catalyses the reaction (5Z,8Z,11Z,14Z)-eicosatetraenoate + reduced [NADPH--hemoprotein reductase] + O2 = (11R,12S)-epoxy-(5Z,8Z,14Z)-eicosatrienoate + oxidized [NADPH--hemoprotein reductase] + H2O + H(+). It carries out the reaction (5Z,8Z,11Z,14Z)-eicosatetraenoate + reduced [NADPH--hemoprotein reductase] + O2 = (11S,12R)-epoxy-(5Z,8Z,14Z)-eicosatrienoate + oxidized [NADPH--hemoprotein reductase] + H2O + H(+). The enzyme catalyses (5Z,8Z,11Z,14Z)-eicosatetraenoate + reduced [NADPH--hemoprotein reductase] + O2 = (14R,15S)-epoxy-(5Z,8Z,11Z)-eicosatrienoate + oxidized [NADPH--hemoprotein reductase] + H2O + H(+). The catalysed reaction is (5Z,8Z,11Z,14Z)-eicosatetraenoate + reduced [NADPH--hemoprotein reductase] + O2 = (14S,15R)-epoxy-(5Z,8Z,11Z)-eicosatrienoate + oxidized [NADPH--hemoprotein reductase] + H2O + H(+). It catalyses the reaction (5Z,8Z,11Z,14Z,17Z)-eicosapentaenoate + reduced [NADPH--hemoprotein reductase] + O2 = 11,12-epoxy-(5Z,8Z,14Z,17Z)-eicosatetraenoate + oxidized [NADPH--hemoprotein reductase] + H2O + H(+). It carries out the reaction (5Z,8Z,11Z,14Z,17Z)-eicosapentaenoate + reduced [NADPH--hemoprotein reductase] + O2 = 14,15-epoxy-(5Z,8Z,11Z,17Z)-eicosatetraenoate + oxidized [NADPH--hemoprotein reductase] + H2O + H(+). The enzyme catalyses (5Z,8Z,11Z,14Z,17Z)-eicosapentaenoate + reduced [NADPH--hemoprotein reductase] + O2 = (17R,18S)-epoxy-(5Z,8Z,11Z,14Z)-eicosatetraenoate + oxidized [NADPH--hemoprotein reductase] + H2O + H(+). The catalysed reaction is (5Z,8Z,11Z,14Z,17Z)-eicosapentaenoate + reduced [NADPH--hemoprotein reductase] + O2 = (17S,18R)-epoxy-(5Z,8Z,11Z,14Z)-eicosatetraenoate + oxidized [NADPH--hemoprotein reductase] + H2O + H(+). It catalyses the reaction (4Z,7Z,10Z,13Z,16Z,19Z)-docosahexaenoate + reduced [NADPH--hemoprotein reductase] + O2 = (19R,20S)-epoxy-(4Z,7Z,10Z,13Z,16Z)-docosapentaenoate + oxidized [NADPH--hemoprotein reductase] + H2O + H(+). It carries out the reaction (4Z,7Z,10Z,13Z,16Z,19Z)-docosahexaenoate + reduced [NADPH--hemoprotein reductase] + O2 = (19S,20R)-epoxy-(4Z,7Z,10Z,13Z,16Z)-docosapentaenoate + oxidized [NADPH--hemoprotein reductase] + H2O + H(+). The enzyme catalyses all-trans-retinoate + reduced [NADPH--hemoprotein reductase] + O2 = all-trans-4-hydroxyretinoate + oxidized [NADPH--hemoprotein reductase] + H2O + H(+). The catalysed reaction is 17beta-estradiol + reduced [NADPH--hemoprotein reductase] + O2 = 16alpha,17beta-estriol + oxidized [NADPH--hemoprotein reductase] + H2O + H(+). It catalyses the reaction estrone + reduced [NADPH--hemoprotein reductase] + O2 = 16alpha-hydroxyestrone + oxidized [NADPH--hemoprotein reductase] + H2O + H(+). It functions in the pathway steroid metabolism. Its pathway is lipid metabolism; arachidonate metabolism. The protein operates within cofactor metabolism; retinol metabolism. In terms of biological role, a cytochrome P450 monooxygenase involved in the metabolism of various endogenous substrates, including fatty acids, steroid hormones and vitamins. Mechanistically, uses molecular oxygen inserting one oxygen atom into a substrate, and reducing the second into a water molecule, with two electrons provided by NADPH via cytochrome P450 reductase (NADPH--hemoprotein reductase). Primarily catalyzes the epoxidation of double bonds of polyunsaturated fatty acids (PUFA) with a preference for the last double bond. Catalyzes the hydroxylation of carbon-hydrogen bonds. Metabolizes all trans-retinoic acid toward its 4-hydroxylated form. Displays 16-alpha hydroxylase activity toward estrogen steroid hormones, 17beta-estradiol (E2) and estrone (E1). Plays a role in the oxidative metabolism of xenobiotics. It is the principal enzyme responsible for the metabolism of the anti-cancer drug paclitaxel (taxol). The sequence is that of Cytochrome P450 2C8 from Homo sapiens (Human).